Consider the following 444-residue polypeptide: Homogentisate 1,2-dioxygenase (444 aa).

Residues 92 to 111 (GDSADVPPTPPNQLRWDPLP) are disordered. The active-site Proton acceptor is H298. H341 and E347 together coordinate Fe cation. Homogentisate-binding residues include Y356 and H377. A Fe cation-binding site is contributed by H377.

It belongs to the homogentisate dioxygenase family. In terms of assembly, hexamer; dimer of trimers. It depends on Fe cation as a cofactor.

The catalysed reaction is homogentisate + O2 = 4-maleylacetoacetate + H(+). It participates in amino-acid degradation; L-phenylalanine degradation; acetoacetate and fumarate from L-phenylalanine: step 4/6. Functionally, involved in the catabolism of homogentisate (2,5-dihydroxyphenylacetate or 2,5-OH-PhAc), a central intermediate in the degradation of phenylalanine and tyrosine. Catalyzes the oxidative ring cleavage of the aromatic ring of homogentisate to yield maleylacetoacetate. This Burkholderia vietnamiensis (strain G4 / LMG 22486) (Burkholderia cepacia (strain R1808)) protein is Homogentisate 1,2-dioxygenase.